The primary structure comprises 613 residues: Transcription factor MTB1 (613 aa).

A JAZ-interaction domain region spans residues 48-130 (LQNKLSDLVE…RVLQKLHMLF (83 aa)). Disordered regions lie at residues 256-285 (EKNE…FGHD) and 391-441 (AHNV…AERQ). Residues 260–270 (GNNPRLSNSGA) show a composition bias toward polar residues. Basic and acidic residues-rich tracts occupy residues 394-417 (VESE…DEKR) and 427-441 (NGRE…AERQ). Positions 430-443 (EEPLNHVEAERQRR) are basic motif; degenerate. Residues 430–479 (EEPLNHVEAERQRREKLNQRFYALRAVVPNISKMDKASLLGDAIAYITEL) enclose the bHLH domain. Residues 444-479 (EKLNQRFYALRAVVPNISKMDKASLLGDAIAYITEL) form a helix-loop-helix motif region. Positions 490 to 513 (RELRLGSTSRDAITSEDSPSSEIQ) are disordered. Polar residues predominate over residues 495–512 (GSTSRDAITSEDSPSSEI).

In terms of assembly, interacts with MYC2 (via N-terminus). MTB1 competes with MED25 for binding to MYC2. Interacts (via N-terminus) with JAZ7.

The protein localises to the nucleus. In terms of biological role, transcription factor that negatively regulates jasmonate (JA) signaling. Negatively regulates JA-dependent response to wounding, JA-induced expression of defense genes, JA-dependent responses against herbivorous insects, and JA-dependent resistance against Botrytis cinerea infection. Plays a positive role in resistance against the bacterial pathogen Pseudomonas syringae pv tomato DC3000. This Solanum lycopersicum (Tomato) protein is Transcription factor MTB1.